The chain runs to 2009 residues: ADP-ribosylation factor guanine nucleotide-exchange factor SEC7 (2009 aa).

The tract at residues 1–220 (MSEQNSVVNA…ISLSSNGSNT (220 aa)) is disordered. Positions 17–33 (ISSNVETASSVNPSVKP) are enriched in polar residues. A compositionally biased stretch (basic and acidic residues) spans 37-53 (IKEEAKETNGEDQKCKG). Residues 91-118 (EGEDGDEDEDEDEDEDEDNGDEDDEDVD) show a composition bias toward acidic residues. The segment covering 134-143 (SVSGESTESS) has biased composition (low complexity). Positions 144-154 (SGEDEESDESD) are enriched in acidic residues. Residues 155–165 (GNTSNSSSGDE) show a composition bias toward low complexity. A compositionally biased stretch (acidic residues) spans 166–184 (SGSEEEEEEEEEEEEEENA). Residues 194–209 (SVPTNDSTAPRSTHTR) show a composition bias toward polar residues. Low complexity predominate over residues 210–220 (NISLSSNGSNT). Phosphoserine is present on residues serine 212 and serine 215. Phosphothreonine is present on threonine 334. Phosphoserine occurs at positions 447, 452, and 455. The HUS box signature appears at 653–657 (NYDCN). Positions 771-788 (SSARQESRSSLSNDVRSS) are enriched in low complexity. Residues 771-814 (SSARQESRSSLSNDVRSSIMTSNDDFKPTYEDEESRSLSSQNID) form a disordered region. Lysine 797 is covalently cross-linked (Glycyl lysine isopeptide (Lys-Gly) (interchain with G-Cter in ubiquitin)). Serine 807 is subject to Phosphoserine. The SEC7 domain maps to 824 to 1010 (LKLRKTALSE…LFNEIANNEI (187 aa)). Aspartate 940 provides a ligand contact to Mg(2+). Residues 1017 to 1220 (HQAMLSGDTN…QARVANPRVS (204 aa)) are HDS1 domain. Phosphoserine is present on serine 1226. Phosphothreonine is present on threonine 1240. Over residues 1708–1723 (GRKSSVSHHQTTNDTS) the composition is skewed to polar residues. The tract at residues 1708-1803 (GRKSSVSHHQ…KKTKHMKRNE (96 aa)) is disordered. Residues 1724–1751 (QHSDDDSNDRRENDSNISETVERAHQEE) are compositionally biased toward basic and acidic residues. Phosphoserine occurs at positions 1741 and 1752. The span at 1764-1777 (LNGQTKLNNGNSVP) shows a compositional bias: polar residues. The segment at 1836–1883 (FENEDFAHCIPYKEAIRITRLLEKSYEFSRDFNEDYGLRTRLVEARVV) is C2 domain-interacting region (CIR).

In terms of assembly, interacts with ARF1. Interacts (via C-terminus) with RSP5 ubiquitin ligase.

It is found in the cytoplasm. The protein resides in the golgi apparatus. Its subcellular location is the trans-Golgi network. The protein localises to the cytoplasmic vesicle. It localises to the COPI-coated vesicle membrane. It is found in the COPII-coated vesicle membrane. Functionally, guanine exchange factor that acts as an activator of ARF1 at the trans-Golgi network and is thus involved in vesicular budding and traffic between compartments of the Golgi apparatus. Activation of Arf (ADP-ribosylation factor) GTPases is essential for vesicle formation via recruitment of cargo adapters and coat proteins necessary for Golgi trafficking. Also plays an essential role in ER-to-Golgi traffic. SEC7 also acts as an effector of two Rab GTPases, YPT1 and YPT31/32. This Saccharomyces cerevisiae (strain ATCC 204508 / S288c) (Baker's yeast) protein is ADP-ribosylation factor guanine nucleotide-exchange factor SEC7.